The chain runs to 729 residues: E3 ubiquitin-protein ligase SH3RF2 (729 aa).

Residues 12–53 form an RING-type zinc finger; that stretch reads CPVCFEKLDVTAKVLPCQHTFCKPCLQRVFKAHKELRCPECR. The tract at residues 78-105 is disordered; that stretch reads SGQSSGRGGSFRRPGTMTLQDGRKSRTN. SH3 domains lie at 125-184 and 187-252; these read DGVP…VIKQ and QPPP…PNLT. The segment at 258 to 297 is disordered; it reads EKNKGRQSSRTKNLSLVSSSSRGNTSTLRRGPGSRRKVPG. Over residues 263-285 the composition is skewed to polar residues; the sequence is RQSSRTKNLSLVSSSSRGNTSTL. The segment at 370–459 is interaction with PAK4; sequence VVSLPGSQQH…RSPGLYTTWT (90 aa). The SH3 3 domain occupies 380 to 441; the sequence is LSANMFVALH…PNNYVIPIFR (62 aa). Disordered stretches follow at residues 497 to 526 and 610 to 677; these read STAG…QRPL and KSEP…SQPE. Residues 517-526 show a composition bias toward polar residues; it reads RKNGSLQRPL. The tract at residues 641–646 is interaction with PPP1CA; that stretch reads KTVRFQ. Serine 649 is modified (phosphoserine).

This sequence belongs to the SH3RF family. As to quaternary structure, interacts with FASLG and PPP1CA. Interacts with PAK4 and TNFRSF1A. Interacts with DLK1, MAP3K10/MLK2, MAPK8IP1/JIP1, MAPK8IP2/JIP2 and MAPK8IP3/JIP3. Interacts with RAC1 (both active GTP- or inactive GDP-bound forms). In terms of processing, autoubiquitinated. Heart (at protein level). Up-regulated in colon cancer tissues as compared to normal colon tissues (at protein level). Testis. In the heart, present in the apex, left atrium, right atrium, left ventricle and right ventricle, but not in the aorta.

It localises to the nucleus. It carries out the reaction S-ubiquitinyl-[E2 ubiquitin-conjugating enzyme]-L-cysteine + [acceptor protein]-L-lysine = [E2 ubiquitin-conjugating enzyme]-L-cysteine + N(6)-ubiquitinyl-[acceptor protein]-L-lysine.. Its pathway is protein modification; protein ubiquitination. Its function is as follows. Has E3 ubiquitin-protein ligase activity. Acts as an anti-apoptotic regulator of the JNK pathway by ubiquitinating and promoting the degradation of SH3RF1, a scaffold protein that is required for pro-apoptotic JNK activation. Facilitates TNF-alpha-mediated recruitment of adapter proteins TRADD and RIPK1 to TNFRSF1A and regulates PAK4 protein stability via inhibition of its ubiquitin-mediated proteasomal degradation. Inhibits PPP1CA phosphatase activity. This is E3 ubiquitin-protein ligase SH3RF2 (SH3RF2) from Homo sapiens (Human).